Consider the following 348-residue polypeptide: Protein RecA (348 aa).

65-72 (GPESSGKT) is a binding site for ATP. The tract at residues 328–348 (SKPQAETSARLATQEELADDY) is disordered.

It belongs to the RecA family.

It is found in the cytoplasm. Functionally, can catalyze the hydrolysis of ATP in the presence of single-stranded DNA, the ATP-dependent uptake of single-stranded DNA by duplex DNA, and the ATP-dependent hybridization of homologous single-stranded DNAs. It interacts with LexA causing its activation and leading to its autocatalytic cleavage. This is Protein RecA from Ectopseudomonas oleovorans (Pseudomonas oleovorans).